The chain runs to 143 residues: Transcriptional regulator MraZ (143 aa).

SpoVT-AbrB domains are found at residues 5–47 (EYDH…TLDE) and 76–119 (AVEV…DRET).

This sequence belongs to the MraZ family. In terms of assembly, forms oligomers.

The protein resides in the cytoplasm. The protein localises to the nucleoid. In Staphylococcus aureus (strain Mu3 / ATCC 700698), this protein is Transcriptional regulator MraZ.